Here is a 150-residue protein sequence, read N- to C-terminus: Myeloid-derived growth factor homolog (150 aa).

A signal peptide spans 1-22 (MTFLKYLLILCTIFLMVTNSLS).

Belongs to the MYDGF family.

It is found in the secreted. This is Myeloid-derived growth factor homolog from Dictyostelium discoideum (Social amoeba).